Consider the following 499-residue polypeptide: Transcriptional regulator sdnM (499 aa).

The protein resides in the nucleus. Its pathway is antibiotic biosynthesis. Its function is as follows. Transcriptional regulator; part of the gene cluster that mediates the biosynthesis of sordarin and hypoxysordarin, glycoside antibiotics with a unique tetracyclic diterpene aglycone structure. First, the geranylgeranyl diphosphate synthase sdnC constructs GGDP from farnesyl diphosphate and isopentenyl diphosphate. The diterpene cyclase sdnA then catalyzes the cyclization of GGDP to afford cycloaraneosene. Cycloaraneosene is then hydroxylated four times by the putative cytochrome P450 monooxygenases sdnB, sdnE, sdnF and sdnH to give a hydroxylated cycloaraneosene derivative such as cycloaraneosene-8,9,13,19-tetraol. Although the order of the hydroxylations is unclear, at least C8, C9 and C13 of the cycloaraneosene skeleton are hydroxylated before the sordaricin formation. Dehydration of the 13-hydroxy group of the hydroxylated cycloaraneosene derivative might be catalyzed by an unassigned hypothetical protein such as sdnG and sdnP to construct the cyclopentadiene moiety. The FAD-dependent oxidoreductase sdnN is proposed to catalyze the oxidation at C9 of the hydroxylated cycloaraneosene derivative and also catalyze the Baeyer-Villiger oxidation to give the lactone intermediate. The presumed lactone intermediate would be hydrolyzed to give an acrolein moiety and a carboxylate moiety. Then, [4+2]cycloaddition would occur between the acrolein moiety and the cyclopentadiene moiety to give sordaricin. SdnN might also be involved in the [4+2]cycloaddition after the hypothesized oxidation to accommodate the oxidized product and prompt the [4+2]cycloaddition. GDP-6-deoxy-D-altrose may be biosynthesized from GDP-D-mannose by the putative GDP-mannose-4,6-dehydratase sdnI and the short-chain dehydrogenase sdnK. The glycosyltransferase sdnJ catalyzes the attachment of 6-deoxy-D-altrose onto the 19-hydroxy group of sordaricin to give 4'-O-demethylsordarin. The methyltransferase sdnD would complete the biosynthesis of sordarin. Sordarin can be further modified into hypoxysordarin. The unique acyl chain at the 3'-hydroxy group of hypoxysordarin would be constructed by an iterative type I PKS sdnO and the trans-acting polyketide methyltransferase sdnL. SdnL would be responsible for the introduction of an alpha-methyl group of the polyketide chain. Alternatively, the beta-lactamase-like protein sdnR might be responsible for the cleavage and transfer of the polyketide chain from the PKS sdnO to sordarin. Two putative cytochrome P450 monooxygenases, sdnQ and sdnT, might catalyze the epoxidations of the polyketide chain to complete the biosynthesis of hypoxysordarin. Transcriptional regulators sdnM and sdnS are presumably encoded for the transcriptional regulation of the expression of the sdn gene cluster. This is Transcriptional regulator sdnM from Sordaria araneosa (Pleurage araneosa).